The primary structure comprises 424 residues: Histidine--tRNA ligase (424 aa).

Belongs to the class-II aminoacyl-tRNA synthetase family. As to quaternary structure, homodimer.

Its subcellular location is the cytoplasm. The enzyme catalyses tRNA(His) + L-histidine + ATP = L-histidyl-tRNA(His) + AMP + diphosphate + H(+). In Shewanella halifaxensis (strain HAW-EB4), this protein is Histidine--tRNA ligase.